The chain runs to 310 residues: Glutamyl-Q tRNA(Asp) synthetase (310 aa).

L-glutamate is bound by residues 24–28 and E60; that span reads RFAPS. The 'HIGH' region signature appears at 27–37; sequence PSPSGPLHFGS. Zn(2+) is bound by residues C116, C118, Y130, and C134. 2 residues coordinate L-glutamate: Y187 and R205. Positions 243 to 247 match the 'KMSKS' region motif; it reads KLSKQ. K246 is an ATP binding site.

It belongs to the class-I aminoacyl-tRNA synthetase family. GluQ subfamily. It depends on Zn(2+) as a cofactor.

In terms of biological role, catalyzes the tRNA-independent activation of glutamate in presence of ATP and the subsequent transfer of glutamate onto a tRNA(Asp). Glutamate is transferred on the 2-amino-5-(4,5-dihydroxy-2-cyclopenten-1-yl) moiety of the queuosine in the wobble position of the QUC anticodon. In Photobacterium profundum (strain SS9), this protein is Glutamyl-Q tRNA(Asp) synthetase.